A 403-amino-acid chain; its full sequence is Pantothenate kinase (403 aa).

Phosphoserine is present on residues Ser-80, Ser-82, and Ser-84.

The protein belongs to the type II pantothenate kinase family.

The protein localises to the cytoplasm. Its subcellular location is the nucleus. It carries out the reaction (R)-pantothenate + ATP = (R)-4'-phosphopantothenate + ADP + H(+). The protein operates within cofactor biosynthesis; coenzyme A biosynthesis; CoA from (R)-pantothenate: step 1/5. Its activity is regulated as follows. Regulated by feedback inhibition by malonyl-CoA. Its function is as follows. Plays a role in the physiological regulation of the intracellular CoA concentration. This Schizosaccharomyces pombe (strain 972 / ATCC 24843) (Fission yeast) protein is Pantothenate kinase.